A 406-amino-acid chain; its full sequence is Phosphopentomutase (406 aa).

Residues Asp-10, Asp-305, His-310, Asp-346, His-347, and His-358 each coordinate Mn(2+).

The protein belongs to the phosphopentomutase family. The cofactor is Mn(2+).

Its subcellular location is the cytoplasm. The enzyme catalyses 2-deoxy-alpha-D-ribose 1-phosphate = 2-deoxy-D-ribose 5-phosphate. It catalyses the reaction alpha-D-ribose 1-phosphate = D-ribose 5-phosphate. The protein operates within carbohydrate degradation; 2-deoxy-D-ribose 1-phosphate degradation; D-glyceraldehyde 3-phosphate and acetaldehyde from 2-deoxy-alpha-D-ribose 1-phosphate: step 1/2. Its function is as follows. Isomerase that catalyzes the conversion of deoxy-ribose 1-phosphate (dRib-1-P) and ribose 1-phosphate (Rib-1-P) to deoxy-ribose 5-phosphate (dRib-5-P) and ribose 5-phosphate (Rib-5-P), respectively. The protein is Phosphopentomutase of Photobacterium profundum (strain SS9).